The following is a 251-amino-acid chain: Triosephosphate isomerase (251 aa).

9 to 11 contributes to the substrate binding site; it reads NWK. The Electrophile role is filled by histidine 95. Glutamate 167 acts as the Proton acceptor in catalysis. Substrate-binding positions include glycine 173, serine 212, and 233–234; that span reads GG.

Belongs to the triosephosphate isomerase family. As to quaternary structure, homodimer.

The protein resides in the cytoplasm. The catalysed reaction is D-glyceraldehyde 3-phosphate = dihydroxyacetone phosphate. Its pathway is carbohydrate biosynthesis; gluconeogenesis. It participates in carbohydrate degradation; glycolysis; D-glyceraldehyde 3-phosphate from glycerone phosphate: step 1/1. Functionally, involved in the gluconeogenesis. Catalyzes stereospecifically the conversion of dihydroxyacetone phosphate (DHAP) to D-glyceraldehyde-3-phosphate (G3P). In Pseudomonas aeruginosa (strain LESB58), this protein is Triosephosphate isomerase.